The following is a 724-amino-acid chain: Probable ATP-dependent RNA helicase DDX4 (724 aa).

The span at 1 to 11 (MSGQEDWESEI) shows a compositional bias: acidic residues. Disordered regions lie at residues 1–25 (MSGQ…SNSE) and 37–241 (SSNN…QGPR). Basic and acidic residues predominate over residues 108-130 (SNGKQESGDFTNDDNRTIDDNRR). Residues 168–182 (EQSGFTSNDGFNNET) are compositionally biased toward polar residues. Residues 286-314 (LTFEEANLCDSLAKNVCKSGYVKLTPIQK) carry the Q motif motif. Residues 317–500 (IPIIVAGRDL…REILKPDYLF (184 aa)) form the Helicase ATP-binding domain. 330 to 337 (AQTGSGKT) contributes to the ATP binding site. Residues 444–447 (DEAD) carry the DEAD box motif. Residues 512 to 675 (DVEQMVIEVD…EVPAWLEEVA (164 aa)) form the Helicase C-terminal domain. A compositionally biased stretch (polar residues) spans 683 to 692 (AYNPRSNKFA). The interval 683–724 (AYNPRSNKFASTDDRKRGDSRGDYSTSGFSPSAAQAEEEDWG) is disordered. A compositionally biased stretch (basic and acidic residues) spans 693–704 (STDDRKRGDSRG). Residues 705-715 (DYSTSGFSPSA) are compositionally biased toward polar residues.

The protein belongs to the DEAD box helicase family. DDX4/VASA subfamily.

Its subcellular location is the cytoplasm. The enzyme catalyses ATP + H2O = ADP + phosphate + H(+). Its function is as follows. Probable ATP-dependent RNA helicase required during spermatogenesis to repress transposable elements and preventing their mobilization, which is essential for the germline integrity. Acts via the piRNA metabolic process, which mediates the repression of transposable elements during meiosis by forming complexes composed of piRNAs and Piwi proteins and governs the methylation and subsequent repression of transposons. Involved in the secondary piRNAs metabolic process, the production of piRNAs in fetal male germ cells through a ping-pong amplification cycle. The protein is Probable ATP-dependent RNA helicase DDX4 of Pelophylax lessonae (Pool frog).